Reading from the N-terminus, the 440-residue chain is Xaa-Pro dipeptidase (440 aa).

Residues Asp-244, Asp-255, His-335, Glu-380, and Glu-419 each contribute to the Mn(2+) site.

It belongs to the peptidase M24B family. Bacterial-type prolidase subfamily. Mn(2+) is required as a cofactor.

The catalysed reaction is Xaa-L-Pro dipeptide + H2O = an L-alpha-amino acid + L-proline. Splits dipeptides with a prolyl residue in the C-terminal position. The polypeptide is Xaa-Pro dipeptidase (Shewanella pealeana (strain ATCC 700345 / ANG-SQ1)).